The chain runs to 249 residues: Indole-3-glycerol phosphate synthase (249 aa).

The protein belongs to the TrpC family.

The enzyme catalyses 1-(2-carboxyphenylamino)-1-deoxy-D-ribulose 5-phosphate + H(+) = (1S,2R)-1-C-(indol-3-yl)glycerol 3-phosphate + CO2 + H2O. It participates in amino-acid biosynthesis; L-tryptophan biosynthesis; L-tryptophan from chorismate: step 4/5. In Pyrobaculum aerophilum (strain ATCC 51768 / DSM 7523 / JCM 9630 / CIP 104966 / NBRC 100827 / IM2), this protein is Indole-3-glycerol phosphate synthase.